The primary structure comprises 329 residues: Basic leucine zipper 61 (329 aa).

Disordered regions lie at residues 1-22 (MAQL…FSSQ) and 98-204 (DDVH…HDPK). Residues 10-22 (TMTTPNWPDFSSQ) are compositionally biased toward polar residues. Residues 119 to 133 (PTRSSSNTSTPSDHN) are compositionally biased toward low complexity. Residues 139-154 (DNNKEAPPSDHDHHMD) show a composition bias toward basic and acidic residues. Over residues 155 to 169 (NNVANQNNAAGNNYN) the composition is skewed to low complexity. Residues 202–254 (DPKRVKRILANRQSAQRSRVRKLQYISELERSVTSLQTEVSVLSPRVAFLDHQ) enclose the bZIP domain. The segment at 204–223 (KRVKRILANRQSAQRSRVRK) is basic motif. The segment at 230–251 (LERSVTSLQTEVSVLSPRVAFL) is leucine-zipper. Polar residues predominate over residues 304-313 (KMENNVSDQS). The segment at 304–329 (KMENNVSDQSPADIKPSVEKEQLLNV) is disordered. Positions 319–329 (PSVEKEQLLNV) are enriched in basic and acidic residues.

Forms heterodimers with BZIP18, BZIP43 and VIP1/BZIP51.

Its subcellular location is the nucleus. Its function is as follows. Transcriptional activator. The chain is Basic leucine zipper 61 from Arabidopsis thaliana (Mouse-ear cress).